The chain runs to 242 residues: Phosphoribosyl isomerase A (242 aa).

Asp12 (proton acceptor) is an active-site residue. The Proton donor role is filled by Asp131.

Belongs to the HisA/HisF family.

It localises to the cytoplasm. The catalysed reaction is 1-(5-phospho-beta-D-ribosyl)-5-[(5-phospho-beta-D-ribosylamino)methylideneamino]imidazole-4-carboxamide = 5-[(5-phospho-1-deoxy-D-ribulos-1-ylimino)methylamino]-1-(5-phospho-beta-D-ribosyl)imidazole-4-carboxamide. It carries out the reaction N-(5-phospho-beta-D-ribosyl)anthranilate = 1-(2-carboxyphenylamino)-1-deoxy-D-ribulose 5-phosphate. It participates in amino-acid biosynthesis; L-histidine biosynthesis; L-histidine from 5-phospho-alpha-D-ribose 1-diphosphate: step 4/9. It functions in the pathway amino-acid biosynthesis; L-tryptophan biosynthesis; L-tryptophan from chorismate: step 3/5. Functionally, involved in both the histidine and tryptophan biosynthetic pathways. In Streptomyces avermitilis (strain ATCC 31267 / DSM 46492 / JCM 5070 / NBRC 14893 / NCIMB 12804 / NRRL 8165 / MA-4680), this protein is Phosphoribosyl isomerase A.